The primary structure comprises 138 residues: MLQPKRTKFRKQHKGRNRGVATRGSKVSFGEFGLKAVGRGRITARQLEAARRAISRHVKRGGRIWIRIFPDKPISKKPAEVRMGKGKGNPEYWVALIQPGKVLYEMEGVTEEVAREAFALGAAKLPVQTAFVSRRVMG.

Basic residues predominate over residues 1–17 (MLQPKRTKFRKQHKGRN). Residues 1-22 (MLQPKRTKFRKQHKGRNRGVAT) form a disordered region.

The protein belongs to the universal ribosomal protein uL16 family. As to quaternary structure, part of the 50S ribosomal subunit.

Functionally, binds 23S rRNA and is also seen to make contacts with the A and possibly P site tRNAs. The polypeptide is Large ribosomal subunit protein uL16 (Acidithiobacillus ferrooxidans (strain ATCC 23270 / DSM 14882 / CIP 104768 / NCIMB 8455) (Ferrobacillus ferrooxidans (strain ATCC 23270))).